The following is a 108-amino-acid chain: Nucleoid-associated protein PSPTO_3645 (108 aa).

Over residues 85-96 (QASQDKTASMTA) the composition is skewed to polar residues. The segment at 85–108 (QASQDKTASMTAGMQLPPGMKLPF) is disordered.

This sequence belongs to the YbaB/EbfC family. In terms of assembly, homodimer.

The protein localises to the cytoplasm. Its subcellular location is the nucleoid. Binds to DNA and alters its conformation. May be involved in regulation of gene expression, nucleoid organization and DNA protection. The sequence is that of Nucleoid-associated protein PSPTO_3645 from Pseudomonas syringae pv. tomato (strain ATCC BAA-871 / DC3000).